A 454-amino-acid polypeptide reads, in one-letter code: Maintenance of mitochondrial morphology protein 1 (454 aa).

At 1–117 (MESNYTGMDG…SFSSWSFAQG (117 aa)) the chain is on the lumenal side. Residues 118–138 (LIVGQVSVVLVLIFFIKFFIF) form a helical membrane-spanning segment. Topologically, residues 139–454 (SDSSTKTNPN…ESEPGRETHY (316 aa)) are cytoplasmic. The segment at 144 to 164 (KTNPNPAKNSSSTNSLSGLSS) is disordered. Low complexity predominate over residues 153 to 164 (SSSTNSLSGLSS). Residues 215–427 (PAESLDWFNV…EPRFQFIKLP (213 aa)) enclose the SMP-LTD domain. Residues arginine 253, tryptophan 411, arginine 415, tryptophan 430, arginine 432, and serine 433 each coordinate a 1,2-diacyl-sn-glycero-3-phosphate. Residues 434 to 454 (KNTREGKADVDESEPGRETHY) are disordered. Residues 435 to 454 (NTREGKADVDESEPGRETHY) are compositionally biased toward basic and acidic residues.

It belongs to the MMM1 family. As to quaternary structure, homodimer. Component of the ER-mitochondria encounter structure (ERMES) or MDM complex, composed of MMM1, MDM10, MDM12 and MDM34. An MMM1 homodimer associates with one molecule of MDM12 on each side in a pairwise head-to-tail manner, and the SMP-LTD domains of MMM1 and MDM12 generate a continuous hydrophobic tunnel for phospholipid trafficking.

Its subcellular location is the endoplasmic reticulum membrane. Functionally, component of the ERMES/MDM complex, which serves as a molecular tether to connect the endoplasmic reticulum (ER) and mitochondria. Components of this complex are involved in the control of mitochondrial shape and protein biogenesis, and function in nonvesicular lipid trafficking between the ER and mitochondria. Preferentially binds to glycerophospholipids such as phosphatidylcholoine (PC), phosphatidic acid (PA), phosphatidylglycerol (PG), and phosphatidylserine (PS), but not to phosphatidylethanolamine (PE). The MDM12-MMM1 subcomplex functions in the major beta-barrel assembly pathway that is responsible for biogenesis of all outer membrane beta-barrel proteins, and acts in a late step after the SAM complex. The MDM10-MDM12-MMM1 subcomplex further acts in the TOM40-specific pathway after the action of the MDM12-MMM1 complex. Essential for establishing and maintaining the structure of mitochondria and maintenance of mtDNA nucleoids. The protein is Maintenance of mitochondrial morphology protein 1 of Zygosaccharomyces rouxii (strain ATCC 2623 / CBS 732 / NBRC 1130 / NCYC 568 / NRRL Y-229).